We begin with the raw amino-acid sequence, 32 residues long: U13-ctenitoxin-Pn1a (32 aa).

Cystine bridges form between Cys-3-Cys-17, Cys-10-Cys-21, and Cys-16-Cys-30.

In terms of tissue distribution, expressed by the venom gland.

It is found in the secreted. Its function is as follows. Acts as a neurotoxin. The sequence is that of U13-ctenitoxin-Pn1a from Phoneutria nigriventer (Brazilian armed spider).